The sequence spans 552 residues: MDWQKNLLLAAIAAVILMLFIRWNHFQEQLPQHQAGNTPAGSSIAAIAPDSNGDIPSAVPTASDTPQATADSSKVELIQVKTDNLLVTINPLGGDIASVSLPRHFAKLNTPDEPFVLLDNRNNHTYVSQSGLIGTNGTDTAQGRPLFNSSSTSYELKEGSDGLVVDLTLQQGAVNITKRFSFKRGDYLIGVEYLIDNQAETPWSAQLYGQIKRDSQNFVKVSALEMNPYLGAAITTSEENYKKIHFEDIAKQTFETSRQGGWVAMVQHYFISAWIPDASSQVNYKLRKLGDQDLYLLGFTTQPVVVEPGSKGVIKASFYAGPKDTERLEEISPYLDLTVDYGWLWWIAKPLFAFLKFIHGFLGNWGLAIIGLTLSVKLLFFPLSAASYRSMAKMRKLQPKLLELKERYGEDRQKFSQEMMKLYKTEQVNPFGGCLPLLIQMPVFIALYWVLMESVELRHAPFFGWIEDLSRMDPYFVLPIIYGATMWIMQKLNPQPTDPMQARIMNMLPFVFTFMFLWFPAGLVLYWVTNNLLSIAQQYVITRQIERADSKA.

Residues 6–26 traverse the membrane as a helical segment; the sequence is NLLLAAIAAVILMLFIRWNHF. Composition is skewed to polar residues over residues 32 to 41 and 60 to 70; these read QHQAGNTPAG and PTASDTPQATA. Positions 32-70 are disordered; that stretch reads QHQAGNTPAGSSIAAIAPDSNGDIPSAVPTASDTPQATA. Helical transmembrane passes span 365–387, 431–451, 472–492, and 508–528; these read WGLA…SAAS, FGGC…YWVL, MDPY…MQKL, and LPFV…LYWV.

The protein belongs to the OXA1/ALB3/YidC family. Type 1 subfamily. As to quaternary structure, interacts with the Sec translocase complex via SecD. Specifically interacts with transmembrane segments of nascent integral membrane proteins during membrane integration.

It localises to the cell inner membrane. Functionally, required for the insertion and/or proper folding and/or complex formation of integral membrane proteins into the membrane. Involved in integration of membrane proteins that insert both dependently and independently of the Sec translocase complex, as well as at least some lipoproteins. Aids folding of multispanning membrane proteins. This is Membrane protein insertase YidC from Cellvibrio japonicus (strain Ueda107) (Pseudomonas fluorescens subsp. cellulosa).